A 151-amino-acid polypeptide reads, in one-letter code: 3-hydroxyacyl-[acyl-carrier-protein] dehydratase FabZ (151 aa).

Residue H54 is part of the active site.

The protein belongs to the thioester dehydratase family. FabZ subfamily.

The protein localises to the cytoplasm. It catalyses the reaction a (3R)-hydroxyacyl-[ACP] = a (2E)-enoyl-[ACP] + H2O. Involved in unsaturated fatty acids biosynthesis. Catalyzes the dehydration of short chain beta-hydroxyacyl-ACPs and long chain saturated and unsaturated beta-hydroxyacyl-ACPs. In Salmonella agona (strain SL483), this protein is 3-hydroxyacyl-[acyl-carrier-protein] dehydratase FabZ.